A 215-amino-acid polypeptide reads, in one-letter code: 3,4-dihydroxy-2-butanone 4-phosphate synthase (215 aa).

D-ribulose 5-phosphate is bound by residues 38-39 (RE), aspartate 43, 151-155 (RRGHT), and glutamate 175. Mg(2+) is bound at residue glutamate 39. Histidine 154 contributes to the Mg(2+) binding site.

Belongs to the DHBP synthase family. Homodimer. It depends on Mg(2+) as a cofactor. Mn(2+) serves as cofactor.

It carries out the reaction D-ribulose 5-phosphate = (2S)-2-hydroxy-3-oxobutyl phosphate + formate + H(+). Its pathway is cofactor biosynthesis; riboflavin biosynthesis; 2-hydroxy-3-oxobutyl phosphate from D-ribulose 5-phosphate: step 1/1. Catalyzes the conversion of D-ribulose 5-phosphate to formate and 3,4-dihydroxy-2-butanone 4-phosphate. The sequence is that of 3,4-dihydroxy-2-butanone 4-phosphate synthase from Haemophilus influenzae (strain ATCC 51907 / DSM 11121 / KW20 / Rd).